A 553-amino-acid polypeptide reads, in one-letter code: Arginine--tRNA ligase (553 aa).

Positions 130 to 140 (ANPTGDLHIGH) match the 'HIGH' region motif.

Belongs to the class-I aminoacyl-tRNA synthetase family. Monomer.

Its subcellular location is the cytoplasm. It carries out the reaction tRNA(Arg) + L-arginine + ATP = L-arginyl-tRNA(Arg) + AMP + diphosphate. The sequence is that of Arginine--tRNA ligase from Staphylococcus aureus (strain USA300 / TCH1516).